Reading from the N-terminus, the 1049-residue chain is Isoleucine--tRNA ligase (1049 aa).

Residues 48 to 59 (PYPSSPTPHIGT) carry the 'HIGH' region motif. A 'KMSKS' region motif is present at residues 597 to 601 (EMHKS). An ATP-binding site is contributed by K600.

The protein belongs to the class-I aminoacyl-tRNA synthetase family. IleS type 2 subfamily. As to quaternary structure, monomer. Zn(2+) serves as cofactor.

The protein localises to the cytoplasm. It catalyses the reaction tRNA(Ile) + L-isoleucine + ATP = L-isoleucyl-tRNA(Ile) + AMP + diphosphate. Functionally, catalyzes the attachment of isoleucine to tRNA(Ile). As IleRS can inadvertently accommodate and process structurally similar amino acids such as valine, to avoid such errors it has two additional distinct tRNA(Ile)-dependent editing activities. One activity is designated as 'pretransfer' editing and involves the hydrolysis of activated Val-AMP. The other activity is designated 'posttransfer' editing and involves deacylation of mischarged Val-tRNA(Ile). The chain is Isoleucine--tRNA ligase from Saccharolobus islandicus (strain M.16.27) (Sulfolobus islandicus).